The sequence spans 479 residues: Putative F-box/LRR-repeat protein At1g56400 (479 aa).

One can recognise an F-box domain in the interval 12–60; that stretch reads QDRLSNLPDVLLIMIISCLSFKECIRTSVLAKRWRYLCRETRNISFKET. LRR repeat units follow at residues 99–129, 139–167, 186–211, 228–254, 287–312, 342–367, and 419–446; these read YFSI…VLDF, CASR…KIYS, IGWI…SINY, VFES…KYSG, RTKL…SVCP, LHVM…TFDI, and LKFL…ELYM.

In Arabidopsis thaliana (Mouse-ear cress), this protein is Putative F-box/LRR-repeat protein At1g56400.